The primary structure comprises 228 residues: Ion-translocating oxidoreductase complex subunit E (228 aa).

5 helical membrane-spanning segments follow: residues 24-44 (LLGLCPLLAISGTVVNALGLG), 73-93 (VFVLIIASVVTAIELAMNAFF), 95-115 (ELYLILGIFIPLIVTNCAIIG), 130-150 (LADGLAMGLGFTCVLVALGAL), and 184-204 (GFLLALLPPGAFIALGLLIAL).

The protein belongs to the NqrDE/RnfAE family. The complex is composed of six subunits: RnfA, RnfB, RnfC, RnfD, RnfE and RnfG.

Its subcellular location is the cell inner membrane. Its function is as follows. Part of a membrane-bound complex that couples electron transfer with translocation of ions across the membrane. In Thioalkalivibrio sulfidiphilus (strain HL-EbGR7), this protein is Ion-translocating oxidoreductase complex subunit E.